A 182-amino-acid polypeptide reads, in one-letter code: RSCEICHNFGADCESRAEECDSPEDQCGTVLLEVSQAPISFRTIHKNCFSSSLCKLERFDINIGHDSFMRGRIHCCDEEKCEGLQFPGLPLSLPNGYYCPGILGLFTVDSSEHEAICRGTETKCINIAGFRKERYPADIAYNIKGCVSSCPELSLSNRTHEEHRNDLIKVECTDASKIIPSE.

8 cysteine pairs are disulfide-bonded: Cys3–Cys27, Cys6–Cys13, Cys20–Cys48, Cys54–Cys75, Cys76–Cys81, Cys99–Cys124, Cys117–Cys146, and Cys150–Cys172. Asn157 carries N-linked (GlcNAc...) asparagine glycosylation.

The protein belongs to the CNF-like-inhibitor family. Heterotrimer of 2 subunits A and 1 subunit B. N-glycosylation is not important for activity, since deglycosylation does not change its PLA2 inhibitory activity. As to expression, expressed by the liver.

The protein resides in the secreted. In terms of biological role, strongly inhibits its own venom PLA2 and all other PLA2s tested including Elapid, Crotalid and Viperid venom PLA2s, as well as honeybee PLA2s. This Laticauda semifasciata (Black-banded sea krait) protein is Phospholipase A2 inhibitor gamma subunit A.